Here is a 181-residue protein sequence, read N- to C-terminus: Cyclic AMP-dependent transcription factor ATF-3 (181 aa).

The interval 76-97 is disordered; that stretch reads VTKAEVAPEEDERKKRRRERNK. Lys-78 participates in a covalent cross-link: Glycyl lysine isopeptide (Lys-Gly) (interchain with G-Cter in SUMO2). Positions 86–149 constitute a bZIP domain; the sequence is DERKKRRRER…QHLIYMLNLH (64 aa). The basic motif stretch occupies residues 88 to 110; it reads RKKRRRERNKIAAAKCRNKKKEK. Residues 114–142 form a leucine-zipper region; sequence LQKESEKLESVNAELKAQIEELKNEKQHL. Thr-162 carries the post-translational modification Phosphothreonine. A Glycyl lysine isopeptide (Lys-Gly) (interchain with G-Cter in SUMO2) cross-link involves residue Lys-175.

This sequence belongs to the bZIP family. ATF subfamily. In terms of assembly, binds DNA as a homodimer or a heterodimer. Interacts with KAT5; promoting KAT5 autoacetylation and KAT5 deubiquitination by USP7.

The protein localises to the nucleus. Functionally, this protein binds the cAMP response element (CRE) (consensus: 5'-GTGACGT[AC][AG]-3'), a sequence present in many viral and cellular promoters. Represses transcription from promoters with ATF sites. It may repress transcription by stabilizing the binding of inhibitory cofactors at the promoter. The protein is Cyclic AMP-dependent transcription factor ATF-3 (ATF3) of Bos taurus (Bovine).